The following is a 640-amino-acid chain: Calpain-5 (640 aa).

The 318-residue stretch at 26–343 (LFEDPHFPAS…FTDIIKCRLI (318 aa)) folds into the Calpain catalytic domain. Active-site residues include C81, H252, and N284. The domain III stretch occupies residues 344–496 (NTSYLSIHKT…VFTDVPSNCR (153 aa)). In terms of domain architecture, C2 spans 499 to 617 (RLDEPPRTCW…HSLHLQDRSG (119 aa)).

This sequence belongs to the peptidase C2 family.

Its function is as follows. Calcium-regulated non-lysosomal thiol-protease. The chain is Calpain-5 (Capn5) from Rattus norvegicus (Rat).